An 89-amino-acid chain; its full sequence is Small ribosomal subunit protein bS20 (89 aa).

This sequence belongs to the bacterial ribosomal protein bS20 family.

Binds directly to 16S ribosomal RNA. The polypeptide is Small ribosomal subunit protein bS20 (Hahella chejuensis (strain KCTC 2396)).